The following is an 801-amino-acid chain: Sucrose synthase isoform 2 (801 aa).

Residues 271 to 748 (MIFNVVILSP…GLKRIQEKYT (478 aa)) are GT-B glycosyltransferase.

It belongs to the glycosyltransferase 1 family. Plant sucrose synthase subfamily. In terms of assembly, homotetramer. In terms of tissue distribution, exclusively expressed in flowers.

It carries out the reaction an NDP-alpha-D-glucose + D-fructose = a ribonucleoside 5'-diphosphate + sucrose + H(+). Sucrose-cleaving enzyme that provides UDP-glucose and fructose for various metabolic pathways. The polypeptide is Sucrose synthase isoform 2 (Daucus carota (Wild carrot)).